The following is a 65-amino-acid chain: Conotoxin Bu19 (65 aa).

A signal peptide spans Met1 to Ser21. Residues Phe22 to Arg48 constitute a propeptide that is removed on maturation. 2 cysteine pairs are disulfide-bonded: Cys50–Cys56 and Cys51–Cys64. Position 64 is a cysteine amide (Cys64).

This sequence belongs to the conotoxin A superfamily. As to expression, expressed by the venom duct.

It is found in the secreted. This Conus bullatus (Bubble cone) protein is Conotoxin Bu19.